Reading from the N-terminus, the 23-residue chain is Septenin 2c (23 aa).

Expressed in skin granular glands.

It localises to the secreted. Functionally, may act as an antimicrobial peptide. This Osteopilus septentrionalis (Cuban treefrog) protein is Septenin 2c.